The sequence spans 908 residues: 26S proteasome non-ATPase regulatory subunit 2 (908 aa).

Met1 bears the N-acetylmethionine mark. The disordered stretch occupies residues 1 to 52 (MEEGGRDKAPLQPQQPPATSPGSGDEKPSGKERRDAGDKDKEQELSEEDKQL). The segment covering 24–52 (GDEKPSGKERRDAGDKDKEQELSEEDKQL) has biased composition (basic and acidic residues). Residues Ser29 and Ser147 each carry the phosphoserine modification. Tyr194 carries the post-translational modification Phosphotyrosine. A phosphoserine mark is found at Ser361 and Ser363. 5 PC repeats span residues 409–442 (SAAA…YIKS), 443–479 (GALL…TMRL), 480–514 (GSIF…SMEV), 517–551 (VTAL…TELK), and 560–589 (LGLG…PFRS). The residue at position 551 (Lys551) is an N6-acetyllysine. Basic and acidic residues predominate over residues 623-643 (KEKEEDKDKKEKKDKDKKEAP). Residues 623–645 (KEKEEDKDKKEKKDKDKKEAPAD) form a disordered region. 2 PC repeats span residues 692 to 723 (LALA…EVSY) and 742 to 757 (AAML…KDPN). The tract at residues 708–903 (DTLSKFSHDA…LEGFVILRKN (196 aa)) is required for interaction with UBLCP1.

Belongs to the proteasome subunit S2 family. As to quaternary structure, component of the 19S proteasome regulatory particle complex. The 26S proteasome consists of a 20S core particle (CP) and two 19S regulatory subunits (RP). The regulatory particle is made of a lid composed of 9 subunits, a base containing 6 ATPases and few additional components including PSMD2. Interacts with RPGRIP1L. Interacts with CRY1 in a KDM8-dependent manner. Interacts (via C-terminus) with phosphatase UBLCP1 (via ubiquitin-like domain); the interaction recruits UBLCP1 to the 19S regulatory particle where it dephosphorylates 19S subunit PSMC2/RPT1 which impairs PSMC2 ATPase activity and disrupts 26S proteasome assembly.

Functionally, component of the 26S proteasome, a multiprotein complex involved in the ATP-dependent degradation of ubiquitinated proteins. This complex plays a key role in the maintenance of protein homeostasis by removing misfolded or damaged proteins, which could impair cellular functions, and by removing proteins whose functions are no longer required. Therefore, the proteasome participates in numerous cellular processes, including cell cycle progression, apoptosis, or DNA damage repair. Its function is as follows. Binds to the intracellular domain of tumor necrosis factor type 1 receptor. The binding domain of TRAP1 and TRAP2 resides outside the death domain of TNFR1. The polypeptide is 26S proteasome non-ATPase regulatory subunit 2 (PSMD2) (Bos taurus (Bovine)).